We begin with the raw amino-acid sequence, 245 residues long: DNA polymerase sliding clamp 1 (245 aa).

Belongs to the PCNA family. In terms of assembly, the subunits circularize to form a toroid; DNA passes through its center. Replication factor C (RFC) is required to load the toroid on the DNA. Forms a dimeric complex with PCNA3 and a trimeric complex with PCNA2 and PCNA3; does not form homotrimers.

Functionally, sliding clamp subunit that acts as a moving platform for DNA processing. Responsible for tethering the catalytic subunit of DNA polymerase and other proteins to DNA during high-speed replication. The trimeric complex inhibits DNA ligase and both 3'-5' and 5'-3' activity of Hel308 (Hjm) helicase, but stimulates Hjc, the Holliday junction cleavage enzyme. In Sulfurisphaera tokodaii (strain DSM 16993 / JCM 10545 / NBRC 100140 / 7) (Sulfolobus tokodaii), this protein is DNA polymerase sliding clamp 1.